Consider the following 206-residue polypeptide: Large ribosomal subunit protein mL62 (206 aa).

The N-terminal 29 residues, 1–29, are a transit peptide targeting the mitochondrion; that stretch reads MAAARCLRWGLSRAEAWLLPPPTSCCHRA. N5-methylglutamine is present on Q90.

Belongs to the prokaryotic/mitochondrial release factor family. Mitochondrion-specific ribosomal protein mL62 subfamily. Component of the mitochondrial ribosome large subunit (39S) which comprises a 16S rRNA and about 50 distinct proteins. Post-translationally, methylation of glutamine in the GGQ triplet by HEMK1.

It localises to the mitochondrion. It carries out the reaction an N-acyl-L-alpha-aminoacyl-tRNA + H2O = an N-acyl-L-amino acid + a tRNA + H(+). In terms of biological role, essential peptidyl-tRNA hydrolase component of the mitochondrial large ribosomal subunit. Acts as a codon-independent translation release factor that has lost all stop codon specificity and directs the termination of translation in mitochondrion, possibly in case of abortive elongation. May be involved in the hydrolysis of peptidyl-tRNAs that have been prematurely terminated and thus in the recycling of stalled mitochondrial ribosomes. This is Large ribosomal subunit protein mL62 from Bos taurus (Bovine).